The following is a 107-amino-acid chain: UPF0145 protein Memar_1285 (107 aa).

This sequence belongs to the UPF0145 family.

The protein is UPF0145 protein Memar_1285 of Methanoculleus marisnigri (strain ATCC 35101 / DSM 1498 / JR1).